Reading from the N-terminus, the 1485-residue chain is Cystic fibrosis transmembrane conductance regulator (1485 aa).

The Cytoplasmic portion of the chain corresponds to 1-78 (MQRSPVEDAN…SLLRAMARCY (78 aa)). Residues 79–99 (IKPFLLFGFLLYIGEATKTVQ) traverse the membrane as a helical segment. The ABC transmembrane type-1 1 domain maps to 83–353 (LLFGFLLYIG…CMVLRMTVTR (271 aa)). Over 100 to 123 (PQLLGRIIASFDPAHEPERANGYF) the chain is Extracellular. Residues 124-149 (LAFGLGLLFTARFLLLQPAMFGLHHL) traverse the membrane as a helical segment. The Cytoplasmic portion of the chain corresponds to 150–195 (GMQIRIALFSIIYKKTLKLSSRVLDKISTGQLVSLMSANLGKFDQS). The chain crosses the membrane as a helical span at residues 196–216 (LGMAHFIWISPLQCILCTGLI). The Extracellular portion of the chain corresponds to 217–224 (WELIDVNS). Residues 225–245 (FCALAAISLLGVLQAFLSHKM) traverse the membrane as a helical segment. Over 246–299 (GPYKAQKVLLTNKRLALTSEIMENLHSVKAYGWEEIMETLIKNIRQDEVKLTRK) the chain is Cytoplasmic. A helical membrane pass occupies residues 300-320 (IGSLRYFYSSAYFFSAIFVIV). Residues 321–340 (AAVVPHALSRGINLRRIFTT) are Extracellular-facing. A helical membrane pass occupies residues 341-363 (LSYCMVLRMTVTRQLPGSIQMWY). The Cytoplasmic segment spans residues 364 to 856 (DTMRLIWKIE…YVRYVSNNKS (493 aa)). Residues W402, 457–464 (GSMGSGKS), and Q492 each bind ATP. An ABC transporter 1 domain is found at 424 to 645 (NGDAGLFFTN…RPDFSSLLLG (222 aa)). The interval 653 to 826 (SAERRCSILT…GILEEENIEA (174 aa)) is disordered R region. The chain crosses the membrane as a helical span at residues 857–877 (LLYVLIFILFIAAIEIAGSVA). Residues 860–1163 (VLIFILFIAA…CVATSIAVDG (304 aa)) enclose the ABC transmembrane type-1 2 domain. At 878–924 (GIFLITDELWREEHQRSEPNMTKHSNASSSGQTYAITVTPTSSYYIL) the chain is on the extracellular side. Residues N897 and N903 are each glycosylated (N-linked (GlcNAc...) asparagine). Residues 925–946 (YIYVATSESLLAMGFFRGLPFV) traverse the membrane as a discontinuously helical segment. Residues 947–996 (HTTITISKKLHQKMLHAVLSAPMSVLNTMKTGRIMNRFTKDMATIDDMLP) lie on the Cytoplasmic side of the membrane. The helical transmembrane segment at 997-1019 (LLMFDFVQLTVVVVGCILVVSIV) threads the bilayer. Over 1020-1021 (RP) the chain is Extracellular. The chain crosses the membrane as a helical span at residues 1022–1042 (YIFLAATPLAIIFIVMRKYFL). At 1043–1103 (RTGQQLKQLE…TATWFLYLST (61 aa)) the chain is on the cytoplasmic side. A helical membrane pass occupies residues 1104-1124 (LRWFLFRADILFVFFFTLAAW). Residues 1125 to 1138 (IAVGTNQDKPGEIG) lie on the Extracellular side of the membrane. Residues 1139-1159 (IIICLAMLILGTFQWCVATSI) traverse the membrane as a helical segment. The Cytoplasmic segment spans residues 1160–1485 (AVDGMMRSVD…AEDNIQDTRL (326 aa)). The ABC transporter 2 domain occupies 1211–1444 (IEVRNLTVKY…TSHLKQAISP (234 aa)). ATP is bound by residues Y1220 and 1245–1252 (GRTGSGKS). Positions 1452 to 1485 (PRRNSSMRTPQSKLSSVTQTLQEEAEDNIQDTRL) are disordered. The span at 1454 to 1473 (RNSSMRTPQSKLSSVTQTLQ) shows a compositional bias: polar residues. Residues 1474 to 1485 (EEAEDNIQDTRL) show a composition bias toward acidic residues. The short motif at 1483–1485 (TRL) is the PDZ-binding element.

The protein belongs to the ABC transporter superfamily. ABCC family. CFTR transporter (TC 3.A.1.202) subfamily. As to quaternary structure, monomer; does not require oligomerization for channel activity. Interacts with cse1l; this interaction may down-regulate cftr activity. Post-translationally, phosphorylated; this activates the channel. Dephosphorylation strongly decreases ATPase activity. Phosphorylation at PKA sites activates the channel. Phosphorylation at PKC sites enhances the response to phosphorylation by PKA. In terms of tissue distribution, detected in gut epithelium (at protein level). Detected in kidney, spleen, intestine and liver. Detected in pancreatic duct epithelium at 5 dpf and throughout adult life.

It is found in the apical cell membrane. It localises to the early endosome membrane. The protein resides in the cell membrane. The protein localises to the recycling endosome membrane. Its subcellular location is the endoplasmic reticulum membrane. It carries out the reaction ATP + H2O + closed Cl(-) channel = ADP + phosphate + open Cl(-) channel.. The catalysed reaction is chloride(in) = chloride(out). It catalyses the reaction hydrogencarbonate(in) = hydrogencarbonate(out). The enzyme catalyses ATP + H2O = ADP + phosphate + H(+). Epithelial ion channel that plays an important role in the regulation of epithelial ion and water transport and fluid homeostasis. Mediates the transport of chloride ions across the cell membrane. Possesses an intrinsic ATPase activity and utilizes ATP to gate its channel; the passive flow of anions through the channel is gated by cycles of ATP binding and hydrolysis by the ATP-binding domains. The ion channel is also permeable to HCO(3)(-); selectivity depends on the extracellular chloride concentration. Exerts its function also by modulating the activity of other ion channels and transporters. Contributes to the regulation of the pH and the ion content of the epithelial fluid layer. Required for normal fluid homeostasis in the gut. Required for normal volume expansion and cell shape changes of Kupffer's vesicle during embryonic development and for normal establishment of left-right body patterning. Required for normal resistance to infection by P.aeruginosa strain PA14 and strain SMC573. The polypeptide is Cystic fibrosis transmembrane conductance regulator (Danio rerio (Zebrafish)).